Here is a 479-residue protein sequence, read N- to C-terminus: Ribulose bisphosphate carboxylase large chain (479 aa).

The propeptide occupies 1–2; the sequence is MS. Asparagine 123 and threonine 173 together coordinate substrate. Catalysis depends on lysine 175, which acts as the Proton acceptor. Substrate is bound at residue lysine 177. The Mg(2+) site is built by lysine 201, aspartate 203, and glutamate 204. Position 201 is an N6-carboxylysine (lysine 201). At serine 208 the chain carries Phosphoserine. Histidine 294 functions as the Proton acceptor in the catalytic mechanism. Arginine 295 and histidine 327 together coordinate substrate. Threonine 330 is modified (phosphothreonine). Residue serine 379 participates in substrate binding.

Belongs to the RuBisCO large chain family. Type I subfamily. In terms of assembly, heterohexadecamer of 8 large chains and 8 small chains; disulfide-linked. The disulfide link is formed within the large subunit homodimers. It depends on Mg(2+) as a cofactor. Post-translationally, the disulfide bond which can form in the large chain dimeric partners within the hexadecamer appears to be associated with oxidative stress and protein turnover.

The protein localises to the plastid. It localises to the chloroplast. The enzyme catalyses 2 (2R)-3-phosphoglycerate + 2 H(+) = D-ribulose 1,5-bisphosphate + CO2 + H2O. It carries out the reaction D-ribulose 1,5-bisphosphate + O2 = 2-phosphoglycolate + (2R)-3-phosphoglycerate + 2 H(+). RuBisCO catalyzes two reactions: the carboxylation of D-ribulose 1,5-bisphosphate, the primary event in carbon dioxide fixation, as well as the oxidative fragmentation of the pentose substrate in the photorespiration process. Both reactions occur simultaneously and in competition at the same active site. The sequence is that of Ribulose bisphosphate carboxylase large chain from Nasturtium officinale (Watercress).